We begin with the raw amino-acid sequence, 98 residues long: Aspartyl/glutamyl-tRNA(Asn/Gln) amidotransferase subunit C (98 aa).

It belongs to the GatC family. As to quaternary structure, heterotrimer of A, B and C subunits.

The catalysed reaction is L-glutamyl-tRNA(Gln) + L-glutamine + ATP + H2O = L-glutaminyl-tRNA(Gln) + L-glutamate + ADP + phosphate + H(+). The enzyme catalyses L-aspartyl-tRNA(Asn) + L-glutamine + ATP + H2O = L-asparaginyl-tRNA(Asn) + L-glutamate + ADP + phosphate + 2 H(+). Allows the formation of correctly charged Asn-tRNA(Asn) or Gln-tRNA(Gln) through the transamidation of misacylated Asp-tRNA(Asn) or Glu-tRNA(Gln) in organisms which lack either or both of asparaginyl-tRNA or glutaminyl-tRNA synthetases. The reaction takes place in the presence of glutamine and ATP through an activated phospho-Asp-tRNA(Asn) or phospho-Glu-tRNA(Gln). The protein is Aspartyl/glutamyl-tRNA(Asn/Gln) amidotransferase subunit C of Arthrobacter sp. (strain FB24).